The sequence spans 87 residues: Cytochrome c6 (87 aa).

Heme c-binding residues include C10, C13, H14, and M56.

This sequence belongs to the cytochrome c family. PetJ subfamily. As to quaternary structure, monomer. Binds 1 heme c group covalently per subunit.

Its subcellular location is the plastid. The protein localises to the chloroplast thylakoid lumen. Functionally, functions as an electron carrier between membrane-bound cytochrome b6-f and photosystem I in oxygenic photosynthesis. The chain is Cytochrome c6 (petJ) from Euglena gracilis.